We begin with the raw amino-acid sequence, 92 residues long: DNA-binding protein HU (92 aa).

The protein belongs to the bacterial histone-like protein family. As to quaternary structure, homodimer.

Histone-like DNA-binding protein which is capable of wrapping DNA to stabilize it, and thus to prevent its denaturation under extreme environmental conditions. In Buchnera aphidicola subsp. Baizongia pistaciae (strain Bp), this protein is DNA-binding protein HU (hup).